Reading from the N-terminus, the 526-residue chain is Lycopene epsilon cyclase, chloroplastic (526 aa).

NAD(+) is bound at residue 108 to 136 (LVVIGCGPAGLALAAESAKLGLNVGLVGP). A run of 2 helical transmembrane segments spans residues 443–463 (FFLF…RSFF) and 477–497 (FLGS…MFII).

Belongs to the lycopene cyclase family.

It localises to the plastid. It is found in the chloroplast membrane. It carries out the reaction a carotenoid psi-end group = a carotenoid epsilon-end group. Its pathway is carotenoid biosynthesis; alpha-zeacarotene biosynthesis. It participates in carotenoid biosynthesis; delta-carotene biosynthesis. Functionally, catalyzes the single cyclization reaction which converts lycopene to delta-carotene and neurosporene to alpha-zeacarotene. Required for lutein biosynthesis. This chain is Lycopene epsilon cyclase, chloroplastic, found in Solanum lycopersicum (Tomato).